We begin with the raw amino-acid sequence, 137 residues long: Protein Turandot X (137 aa).

A signal peptide spans 1–24 (MRVPVFQLSCLLGLIVCLLCSVKA).

This sequence belongs to the Turandot family.

It is found in the secreted. Functionally, a humoral factor that may play a role in stress tolerance. This chain is Protein Turandot X, found in Drosophila pseudoobscura pseudoobscura (Fruit fly).